The chain runs to 314 residues: Ecto-ADP-ribosyltransferase 4 (314 aa).

A signal peptide spans 1–46 (MGPLINRCKKILLPTTVPPATMRIWLLGGPLPFLLLLSGLQRPTEG). 2 disulfides stabilise this stretch: cysteine 69–cysteine 280 and cysteine 182–cysteine 231. Positions 91 to 276 (KNYFRMWQKA…LQLRSTGNLS (186 aa)) constitute a TR mART core domain. Asparagine 114 carries N-linked (GlcNAc...) asparagine glycosylation. Residue tyrosine 126 coordinates NAD(+). Asparagine 178 is a glycosylation site (N-linked (GlcNAc...) asparagine). Glutamine 206 contacts NAD(+). Asparagine 222 is a glycosylation site (N-linked (GlcNAc...) asparagine). Serine 240 contributes to the NAD(+) binding site. N-linked (GlcNAc...) asparagine glycans are attached at residues asparagine 257 and asparagine 274. Residue alanine 285 is the site of GPI-anchor amidated alanine attachment. Residues 286-314 (SSKKCIPDPIAIASLSFLTSVIIFSKSRV) constitute a propeptide, removed in mature form.

Belongs to the Arg-specific ADP-ribosyltransferase family.

It localises to the cell membrane. The catalysed reaction is L-arginyl-[protein] + NAD(+) = N(omega)-(ADP-D-ribosyl)-L-arginyl-[protein] + nicotinamide + H(+). In Pan troglodytes (Chimpanzee), this protein is Ecto-ADP-ribosyltransferase 4 (ART4).